The primary structure comprises 150 residues: Large ribosomal subunit protein uL15 (150 aa).

Residues 1-13 (MADNDAIKVHDLR) are compositionally biased toward basic and acidic residues. Residues 1-44 (MADNDAIKVHDLRPAPGAKTAKTRVGRGEASKGKTAGRGTKGTK) are disordered.

This sequence belongs to the universal ribosomal protein uL15 family. Part of the 50S ribosomal subunit.

Its function is as follows. Binds to the 23S rRNA. In Micrococcus luteus (strain ATCC 4698 / DSM 20030 / JCM 1464 / CCM 169 / CCUG 5858 / IAM 1056 / NBRC 3333 / NCIMB 9278 / NCTC 2665 / VKM Ac-2230) (Micrococcus lysodeikticus), this protein is Large ribosomal subunit protein uL15.